Consider the following 265-residue polypeptide: Transcriptional repressor DcmR (265 aa).

Positions 17-36 (LDIKQAASLLNVSEASLRRW) form a DNA-binding region, H-T-H motif.

Monomer.

In terms of biological role, transcriptional repressor of the dcmA gene and of its own gene. This chain is Transcriptional repressor DcmR (dcmR), found in Methylorubrum extorquens (strain DSM 6343 / CIP 106787 / DM4) (Methylobacterium extorquens).